The chain runs to 197 residues: DNA-directed RNA polymerases I, II, and III subunit rpabc1 (197 aa).

The protein belongs to the archaeal Rpo5/eukaryotic RPB5 RNA polymerase subunit family. Component of the RNA polymerase I (Pol I), RNA polymerase II (Pol II) and RNA polymerase III (Pol III) complexes consisting of at least 13, 12 and 17 subunits, respectively. In RNA Pol II, this subunit is present in 2-fold molar excess over the other subunits.

The protein resides in the nucleus. DNA-dependent RNA polymerase catalyzes the transcription of DNA into RNA using the four ribonucleoside triphosphates as substrates. Common component of RNA polymerases I, II and III which synthesize ribosomal RNA precursors, mRNA precursors and many functional non-coding RNAs, and small RNAs, such as 5S rRNA and tRNAs, respectively. Pol II is the central component of the basal RNA polymerase II transcription machinery. Pols are composed of mobile elements that move relative to each other. In Pol II, RPB5 is part of the lower jaw surrounding the central large cleft and thought to grab the incoming DNA template. Seems to be the major component in this process. This chain is DNA-directed RNA polymerases I, II, and III subunit rpabc1 (polr2e), found in Dictyostelium discoideum (Social amoeba).